An 80-amino-acid polypeptide reads, in one-letter code: RNA-binding protein Hfq (80 aa).

One can recognise a Sm domain in the interval 10-70 (DLFLNTVRKQ…ISTIMPGQPM (61 aa)).

The protein belongs to the Hfq family. Homohexamer.

RNA chaperone that binds small regulatory RNA (sRNAs) and mRNAs to facilitate mRNA translational regulation in response to envelope stress, environmental stress and changes in metabolite concentrations. Also binds with high specificity to tRNAs. In Rhizobium rhizogenes (strain K84 / ATCC BAA-868) (Agrobacterium radiobacter), this protein is RNA-binding protein Hfq.